Here is a 224-residue protein sequence, read N- to C-terminus: ATP-dependent dethiobiotin synthetase BioD (224 aa).

T18 is a binding site for Mg(2+). Residue K39 is part of the active site. S43 is a substrate binding site. The Mg(2+) site is built by D56 and E117. Residues D56, 117 to 120, and 177 to 178 each bind ATP; these read EGVG and NE.

This sequence belongs to the dethiobiotin synthetase family. In terms of assembly, homodimer. It depends on Mg(2+) as a cofactor.

It is found in the cytoplasm. It catalyses the reaction (7R,8S)-7,8-diammoniononanoate + CO2 + ATP = (4R,5S)-dethiobiotin + ADP + phosphate + 3 H(+). The protein operates within cofactor biosynthesis; biotin biosynthesis; biotin from 7,8-diaminononanoate: step 1/2. Its function is as follows. Catalyzes a mechanistically unusual reaction, the ATP-dependent insertion of CO2 between the N7 and N8 nitrogen atoms of 7,8-diaminopelargonic acid (DAPA, also called 7,8-diammoniononanoate) to form a ureido ring. This Xanthomonas axonopodis pv. citri (strain 306) protein is ATP-dependent dethiobiotin synthetase BioD.